We begin with the raw amino-acid sequence, 185 residues long: Threonylcarbamoyl-AMP synthase (185 aa).

Positions 4 to 185 (SFRVQQAARE…LATGEVVRPG (182 aa)) constitute a YrdC-like domain.

Belongs to the SUA5 family. TsaC subfamily.

The protein resides in the cytoplasm. It catalyses the reaction L-threonine + hydrogencarbonate + ATP = L-threonylcarbamoyladenylate + diphosphate + H2O. In terms of biological role, required for the formation of a threonylcarbamoyl group on adenosine at position 37 (t(6)A37) in tRNAs that read codons beginning with adenine. Catalyzes the conversion of L-threonine, HCO(3)(-)/CO(2) and ATP to give threonylcarbamoyl-AMP (TC-AMP) as the acyladenylate intermediate, with the release of diphosphate. This is Threonylcarbamoyl-AMP synthase from Pseudomonas putida (strain ATCC 700007 / DSM 6899 / JCM 31910 / BCRC 17059 / LMG 24140 / F1).